We begin with the raw amino-acid sequence, 642 residues long: Probable Xaa-Pro aminopeptidase P (642 aa).

The Mn(2+) site is built by Asp-439, Asp-450, Glu-548, and Glu-562.

This sequence belongs to the peptidase M24B family. It depends on Mn(2+) as a cofactor.

It carries out the reaction Release of any N-terminal amino acid, including proline, that is linked to proline, even from a dipeptide or tripeptide.. Catalyzes the removal of a penultimate prolyl residue from the N-termini of peptides. This is Probable Xaa-Pro aminopeptidase P (AMPP) from Laccaria bicolor (strain S238N-H82 / ATCC MYA-4686) (Bicoloured deceiver).